Here is a 305-residue protein sequence, read N- to C-terminus: Methionyl-tRNA formyltransferase (305 aa).

A (6S)-5,6,7,8-tetrahydrofolate-binding site is contributed by 110–113 (SLLP).

This sequence belongs to the Fmt family.

It catalyses the reaction L-methionyl-tRNA(fMet) + (6R)-10-formyltetrahydrofolate = N-formyl-L-methionyl-tRNA(fMet) + (6S)-5,6,7,8-tetrahydrofolate + H(+). In terms of biological role, attaches a formyl group to the free amino group of methionyl-tRNA(fMet). The formyl group appears to play a dual role in the initiator identity of N-formylmethionyl-tRNA by promoting its recognition by IF2 and preventing the misappropriation of this tRNA by the elongation apparatus. The protein is Methionyl-tRNA formyltransferase of Gluconacetobacter diazotrophicus (strain ATCC 49037 / DSM 5601 / CCUG 37298 / CIP 103539 / LMG 7603 / PAl5).